The chain runs to 523 residues: Sporulation protein 23 (523 aa).

Interacts with SPO1 in meiosis.

Functionally, regulates expression of PIS1. This is Sporulation protein 23 (SPO23) from Saccharomyces cerevisiae (strain ATCC 204508 / S288c) (Baker's yeast).